Reading from the N-terminus, the 327-residue chain is Malate dehydrogenase (327 aa).

Position 11–17 (11–17) interacts with NAD(+); that stretch reads GAAGQIS. Substrate-binding residues include Arg92 and Arg98. Residues Asn105, Gln112, and 129 to 131 each bind NAD(+); that span reads VGN. Substrate contacts are provided by Asn131 and Arg162. The Proton acceptor role is filled by His187.

It belongs to the LDH/MDH superfamily. MDH type 2 family.

The enzyme catalyses (S)-malate + NAD(+) = oxaloacetate + NADH + H(+). Catalyzes the reversible oxidation of malate to oxaloacetate. The protein is Malate dehydrogenase of Nitrosomonas europaea (strain ATCC 19718 / CIP 103999 / KCTC 2705 / NBRC 14298).